The following is a 236-amino-acid chain: Exotoxin type H (236 aa).

The N-terminal stretch at Met-1–Ala-32 is a signal peptide.

This sequence belongs to the staphylococcal/streptococcal toxin family.

It is found in the secreted. Functionally, mitogenic for human peripheral blood lymphocytes. This is Exotoxin type H (speH) from Streptococcus pyogenes serotype M1.